Here is a 628-residue protein sequence, read N- to C-terminus: NUAK family SNF1-like kinase 2 (628 aa).

An N-acetylmethionine modification is found at methionine 1. The Protein kinase domain maps to 53 to 303 (YEFLETLGKG…LEDVASHWWV (251 aa)). ATP contacts are provided by residues 59–67 (LGKGTYGKV) and lysine 81. Aspartate 175 serves as the catalytic Proton acceptor. At threonine 208 the chain carries Phosphothreonine; by LKB1. The disordered stretch occupies residues 355 to 493 (KQHAPGGGST…KEQKPPQASG (139 aa)). Serine 435 bears the Phosphoserine mark. A compositionally biased stretch (low complexity) spans 457-469 (SGYYSSPEPSESG). 4 positions are modified to phosphoserine: serine 523, serine 544, serine 547, and serine 573. The segment at 531 to 562 (RPLARASRPSGAVSEDSILSSESFDQLDLPER) is disordered.

This sequence belongs to the protein kinase superfamily. CAMK Ser/Thr protein kinase family. SNF1 subfamily. Requires Mg(2+) as cofactor. Phosphorylated at Thr-208 by STK11/LKB1 in complex with STE20-related adapter-alpha (STRADA) pseudo kinase and CAB39. Autophosphorylation is also possible at Thr-208.

The enzyme catalyses L-seryl-[protein] + ATP = O-phospho-L-seryl-[protein] + ADP + H(+). It catalyses the reaction L-threonyl-[protein] + ATP = O-phospho-L-threonyl-[protein] + ADP + H(+). Activated by phosphorylation on Thr-208. Its function is as follows. Stress-activated kinase involved in tolerance to glucose starvation. Induces cell-cell detachment by increasing F-actin conversion to G-actin. Expression is induced by CD95 or TNF-alpha, via NF-kappa-B. Protects cells from CD95-mediated apoptosis and is required for the increased motility and invasiveness of CD95-activated tumor cells. Phosphorylates LATS1 and LATS2. Plays a key role in neural tube closure during embryonic development through LATS2 phosphorylation and regulation of the nuclear localization of YAP1 a critical downstream regulatory target in the Hippo signaling pathway. This chain is NUAK family SNF1-like kinase 2, found in Homo sapiens (Human).